Consider the following 128-residue polypeptide: Secreted RxLR effector protein 57 (128 aa).

The N-terminal stretch at 1-31 is a signal peptide; the sequence is MHRKRLRVVLSATLLDLITCVQLMLDPLVRS. The short motif at 58–61 is the RxLR element; the sequence is RILR.

This sequence belongs to the RxLR effector family.

It localises to the secreted. Its subcellular location is the host nucleus. It is found in the host cytoplasm. Its function is as follows. Secreted effector that completely suppresses the host cell death induced by cell death-inducing proteins. This is Secreted RxLR effector protein 57 from Plasmopara viticola (Downy mildew of grapevine).